Reading from the N-terminus, the 141-residue chain is Holo-[acyl-carrier-protein] synthase (141 aa).

The Mg(2+) site is built by aspartate 7 and glutamate 57.

This sequence belongs to the P-Pant transferase superfamily. AcpS family. Mg(2+) is required as a cofactor.

The protein resides in the cytoplasm. The catalysed reaction is apo-[ACP] + CoA = holo-[ACP] + adenosine 3',5'-bisphosphate + H(+). In terms of biological role, transfers the 4'-phosphopantetheine moiety from coenzyme A to a Ser of acyl-carrier-protein. This Corynebacterium efficiens (strain DSM 44549 / YS-314 / AJ 12310 / JCM 11189 / NBRC 100395) protein is Holo-[acyl-carrier-protein] synthase.